A 201-amino-acid chain; its full sequence is Small ribosomal subunit protein uS4c (201 aa).

The segment at Ala17–Tyr44 is disordered. Residues Met89–Gln149 enclose the S4 RNA-binding domain.

The protein belongs to the universal ribosomal protein uS4 family. Part of the 30S ribosomal subunit. Contacts protein S5. The interaction surface between S4 and S5 is involved in control of translational fidelity.

Its subcellular location is the plastid. It localises to the chloroplast. One of the primary rRNA binding proteins, it binds directly to 16S rRNA where it nucleates assembly of the body of the 30S subunit. Functionally, with S5 and S12 plays an important role in translational accuracy. This chain is Small ribosomal subunit protein uS4c (rps4), found in Nicotiana sylvestris (Wood tobacco).